A 105-amino-acid polypeptide reads, in one-letter code: Nucleoid-associated protein ABC0038 (105 aa).

The span at 1–22 (MEMKNMGNMMKQMQKMQKQMMK) shows a compositional bias: low complexity. Residues 1–26 (MEMKNMGNMMKQMQKMQKQMMKAQEE) form a disordered region.

This sequence belongs to the YbaB/EbfC family. In terms of assembly, homodimer.

The protein localises to the cytoplasm. The protein resides in the nucleoid. In terms of biological role, binds to DNA and alters its conformation. May be involved in regulation of gene expression, nucleoid organization and DNA protection. The chain is Nucleoid-associated protein ABC0038 from Shouchella clausii (strain KSM-K16) (Alkalihalobacillus clausii).